Here is a 243-residue protein sequence, read N- to C-terminus: 2,3-bisphosphoglycerate-dependent phosphoglycerate mutase (243 aa).

Residues 8–15, 21–22, Arg-60, 87–90, Lys-98, 114–115, and 183–184 contribute to the substrate site; these read RHGQSEWN, TG, ERHY, RR, and GN. His-9 serves as the catalytic Tele-phosphohistidine intermediate. The active-site Proton donor/acceptor is Glu-87.

This sequence belongs to the phosphoglycerate mutase family. BPG-dependent PGAM subfamily.

The enzyme catalyses (2R)-2-phosphoglycerate = (2R)-3-phosphoglycerate. Its pathway is carbohydrate degradation; glycolysis; pyruvate from D-glyceraldehyde 3-phosphate: step 3/5. Catalyzes the interconversion of 2-phosphoglycerate and 3-phosphoglycerate. The protein is 2,3-bisphosphoglycerate-dependent phosphoglycerate mutase of Clostridium acetobutylicum (strain ATCC 824 / DSM 792 / JCM 1419 / IAM 19013 / LMG 5710 / NBRC 13948 / NRRL B-527 / VKM B-1787 / 2291 / W).